The sequence spans 194 residues: GTP cyclohydrolase 1 (194 aa).

The Zn(2+) site is built by Cys-83, His-86, and Cys-155.

It belongs to the GTP cyclohydrolase I family. In terms of assembly, homomer.

The enzyme catalyses GTP + H2O = 7,8-dihydroneopterin 3'-triphosphate + formate + H(+). It functions in the pathway cofactor biosynthesis; 7,8-dihydroneopterin triphosphate biosynthesis; 7,8-dihydroneopterin triphosphate from GTP: step 1/1. The sequence is that of GTP cyclohydrolase 1 from Streptococcus pyogenes serotype M49 (strain NZ131).